A 305-amino-acid chain; its full sequence is Foldase protein PrsA (305 aa).

A signal peptide spans 1–19 (MKKWFIALAGLLLTVTLAG). Residue cysteine 20 is the site of N-palmitoyl cysteine attachment. Cysteine 20 carries S-diacylglycerol cysteine lipidation. Positions 136-235 (EPEVSVAHIL…YGYHVILMLK (100 aa)) constitute a PpiC domain.

The protein belongs to the PrsA family.

Its subcellular location is the cell membrane. The catalysed reaction is [protein]-peptidylproline (omega=180) = [protein]-peptidylproline (omega=0). Functionally, plays a major role in protein secretion by helping the post-translocational extracellular folding of several secreted proteins. The polypeptide is Foldase protein PrsA (Levilactobacillus brevis (strain ATCC 367 / BCRC 12310 / CIP 105137 / JCM 1170 / LMG 11437 / NCIMB 947 / NCTC 947) (Lactobacillus brevis)).